A 242-amino-acid chain; its full sequence is Lysosomal membrane ascorbate-dependent ferrireductase CYB561A3 (242 aa).

Residues 1 to 7 lie on the Cytoplasmic side of the membrane; sequence MVSGRFY. Residues 8–28 traverse the membrane as a helical segment; that stretch reads LSCLLLGSLGSMCILFTIYWM. Residues 12-219 form the Cytochrome b561 domain; the sequence is LLGSLGSMCI…FGLLVLYILL (208 aa). At 29–45 the chain is on the lumenal side; it reads QYWRGGFAWNGSIYMFN. N-linked (GlcNAc...) asparagine glycosylation is present at asparagine 38. The chain crosses the membrane as a helical span at residues 46–66; it reads WHPVLMVAGMVVFYGGASLVY. Heme b contacts are provided by histidine 47 and arginine 67. At 67–83 the chain is on the cytoplasmic side; that stretch reads RLPQSWVGPKLPWKLLH. The L-ascorbate site is built by lysine 76 and lysine 80. Histidine 83 provides a ligand contact to heme b. The chain crosses the membrane as a helical span at residues 84–104; sequence AALHLMAFVLTVVGLVAVFTF. Residues 105–119 lie on the Lumenal side of the membrane; the sequence is HNHGRTANLYSLHSW. Residues 112-115 and histidine 117 each bind heme b; that span reads NLYS. A helical membrane pass occupies residues 120–140; the sequence is LGITTVFLFACQWFLGFAVFL. Over 141–154 the chain is Cytoplasmic; it reads LPWASMWLRSLLKP. Residue arginine 149 coordinates L-ascorbate. The chain crosses the membrane as a helical span at residues 155-175; the sequence is IHVFFGAAILSLSIASVISGI. 2 residues coordinate heme b: histidine 156 and glutamate 177. Topologically, residues 176 to 202 are lumenal; it reads NEKLFFSLKNTTRPYHSLPSEAVFANS. A helical membrane pass occupies residues 203–223; it reads TGMLVVAFGLLVLYILLASSW. Lysine 224 contacts heme b. Topologically, residues 224 to 242 are cytoplasmic; it reads KRPEPGILTDRQPLLHDGE.

Homodimer. Requires heme b as cofactor. Post-translationally, N-glycosylated.

Its subcellular location is the late endosome membrane. It localises to the lysosome membrane. It catalyses the reaction Fe(3+)(out) + L-ascorbate(in) = monodehydro-L-ascorbate radical(in) + Fe(2+)(out) + H(+). In terms of biological role, transmembrane reductase that uses ascorbate as an electron donor in the cytoplasm and transfers electrons across membranes to reduce iron cations Fe(3+) into Fe(2+) in the lumen of the late endosome and lysosome. Reduced iron can then be extruded from the late endosome and lysosome to the cytoplasm by divalent metal-specific transporters. It is therefore most probably involved in endosomal and lysosomal cellular iron homeostasis. The sequence is that of Lysosomal membrane ascorbate-dependent ferrireductase CYB561A3 from Homo sapiens (Human).